Consider the following 315-residue polypeptide: Methionyl-tRNA formyltransferase (315 aa).

115–118 (SLLP) is a (6S)-5,6,7,8-tetrahydrofolate binding site.

This sequence belongs to the Fmt family.

The enzyme catalyses L-methionyl-tRNA(fMet) + (6R)-10-formyltetrahydrofolate = N-formyl-L-methionyl-tRNA(fMet) + (6S)-5,6,7,8-tetrahydrofolate + H(+). Functionally, attaches a formyl group to the free amino group of methionyl-tRNA(fMet). The formyl group appears to play a dual role in the initiator identity of N-formylmethionyl-tRNA by promoting its recognition by IF2 and preventing the misappropriation of this tRNA by the elongation apparatus. The sequence is that of Methionyl-tRNA formyltransferase from Dehalococcoides mccartyi (strain ATCC BAA-2100 / JCM 16839 / KCTC 5957 / BAV1).